Here is a 382-residue protein sequence, read N- to C-terminus: uncharacterized protein (382 aa).

The next 12 membrane-spanning stretches (helical) occupy residues 8–28 (VLLL…LNTL), 39–61 (PTWQ…TLLT), 75–95 (YLAS…VGFW), 102–122 (FIAG…LMCS), 131–151 (LLAA…LMIS), 157–177 (LMSV…PLLF), 204–224 (LGVN…GLMP), 236–256 (GIGF…WPIG), 265–284 (LLVL…AMLG), 289–311 (APAL…AWAC), 325–345 (ALLL…AMLM), and 349–369 (SDNL…LMLL).

It belongs to the major facilitator superfamily. YcaD (TC 2.A.1.26) family.

It is found in the cell inner membrane. This is an uncharacterized protein from Enterobacter sp. (strain 638).